The chain runs to 102 residues: Large ribosomal subunit protein P1 (102 aa).

The segment at 69–91 is disordered; that stretch reads APAAAAEEKKEEEKKEEKKEEDT. Residues 74-90 show a composition bias toward basic and acidic residues; the sequence is AEEKKEEEKKEEKKEED.

It belongs to the eukaryotic ribosomal protein P1/P2 family. Part of the 50S ribosomal subunit. Homodimer, it forms part of the ribosomal stalk which helps the ribosome interact with GTP-bound translation factors. Forms a heptameric uL10/P0(P1)2(P1)2(P1)2 complex, where uL10/P0 forms an elongated spine to which the P1 dimers bind in a sequential fashion.

Functionally, forms part of the ribosomal stalk, playing a central role in the interaction of the ribosome with GTP-bound translation factors. The chain is Large ribosomal subunit protein P1 from Methanocaldococcus jannaschii (strain ATCC 43067 / DSM 2661 / JAL-1 / JCM 10045 / NBRC 100440) (Methanococcus jannaschii).